Here is a 468-residue protein sequence, read N- to C-terminus: 3-isopropylmalate dehydratase large subunit (468 aa).

Positions 347, 407, and 410 each coordinate [4Fe-4S] cluster.

The protein belongs to the aconitase/IPM isomerase family. LeuC type 1 subfamily. In terms of assembly, heterodimer of LeuC and LeuD. The cofactor is [4Fe-4S] cluster.

The catalysed reaction is (2R,3S)-3-isopropylmalate = (2S)-2-isopropylmalate. It participates in amino-acid biosynthesis; L-leucine biosynthesis; L-leucine from 3-methyl-2-oxobutanoate: step 2/4. In terms of biological role, catalyzes the isomerization between 2-isopropylmalate and 3-isopropylmalate, via the formation of 2-isopropylmaleate. The protein is 3-isopropylmalate dehydratase large subunit of Synechococcus sp. (strain CC9311).